The sequence spans 175 residues: Nucleoplasmin-3 (175 aa).

N-acetylalanine is present on Ala-2. The residue at position 16 (Ser-16) is a Phosphoserine. Omega-N-methylarginine is present on Arg-27. A phosphoserine mark is found at Ser-147 and Ser-151.

This sequence belongs to the nucleoplasmin family. Interacts with NPM (via N-terminus). Forms a pentamer with NPM at a ratio 4:1 (NPM3/NPM). Two pentamers form a decamer. In terms of processing, phosphorylated. In terms of tissue distribution, predominantly expressed in testis.

The protein localises to the nucleus. It localises to the nucleolus. Plays a role in the regulation of diverse cellular processes such as ribosome biogenesis, chromatin remodeling or protein chaperoning. Modulates the histone chaperone function and the RNA-binding activity of nucleolar phosphoprotein B23/NPM. Efficiently mediates chromatin remodeling when included in a pentamer containing NPM3 and NPM. The sequence is that of Nucleoplasmin-3 (Npm3) from Mus musculus (Mouse).